Reading from the N-terminus, the 895-residue chain is Ras and Rab interactor 2 (895 aa).

The SH2 domain occupies W97–Y190. The interval L284–L361 is disordered. Pro residues predominate over residues S306–A315. Residues T328 to V338 are compositionally biased toward polar residues. At S366 the chain carries Phosphoserine. Disordered regions lie at residues G373–L442 and S460–K481. Low complexity predominate over residues S430–S441. Phosphoserine is present on S501. T509 is modified (phosphothreonine). Positions D618–A757 constitute a VPS9 domain. A Ras-associating domain is found at F787–N878.

Belongs to the RIN (Ras interaction/interference) family. Homotetramer; probably composed of anti-parallel linkage of two parallel dimers. Interacts with Ras. Interacts with RAB5B, with a much higher affinity for GTP-bound activated RAB5B. Does not interact with other members of the Rab family. As to expression, widely expressed. Expressed in heart, kidney, lung placenta. Expressed at low level in skeletal muscle, spleen and peripheral blood.

It is found in the cytoplasm. Ras effector protein. May function as an upstream activator and/or downstream effector for RAB5B in endocytic pathway. May function as a guanine nucleotide exchange (GEF) of RAB5B, required for activating the RAB5 proteins by exchanging bound GDP for free GTP. The sequence is that of Ras and Rab interactor 2 (RIN2) from Homo sapiens (Human).